Here is a 272-residue protein sequence, read N- to C-terminus: MSAAPDAQDSTANDRFTVLIPARMASTRLPGKPLADLAGLPMVVRVAKRAVHSAADRVLVATDDARILQACAAHGVEAILTRADHASGSDRLAEACAQLGLADQHIVVNVQGDEPLIAPELIDAVAALLPARPEAGMGTAAHAIATLADYHNPQVVKVVLDARGLAQYFSRAPIPFARNPAEHGWCSAGAAPGMGTLAGHAPLRHIGIYSYRAGFLRQLTQLAPAPTETIEALEQLRALWHGHRIAVHLTAAAAGPGVDTPEDLERVRRLLL.

The protein belongs to the KdsB family.

The protein localises to the cytoplasm. It carries out the reaction 3-deoxy-alpha-D-manno-oct-2-ulosonate + CTP = CMP-3-deoxy-beta-D-manno-octulosonate + diphosphate. It participates in nucleotide-sugar biosynthesis; CMP-3-deoxy-D-manno-octulosonate biosynthesis; CMP-3-deoxy-D-manno-octulosonate from 3-deoxy-D-manno-octulosonate and CTP: step 1/1. Its pathway is bacterial outer membrane biogenesis; lipopolysaccharide biosynthesis. Activates KDO (a required 8-carbon sugar) for incorporation into bacterial lipopolysaccharide in Gram-negative bacteria. This is 3-deoxy-manno-octulosonate cytidylyltransferase from Verminephrobacter eiseniae (strain EF01-2).